The following is a 657-amino-acid chain: KNR4/SMI1 homolog (657 aa).

Disordered stretches follow at residues 168–193 (EQQQRAKSSSELPQTVTPQAVKQKGY), 366–402 (SSSVVNRPTPADAAGQARKTQGYSPMVPGASSNESVS), and 416–657 (LTQT…TVAL). A compositionally biased stretch (polar residues) spans 174–187 (KSSSELPQTVTPQA). A compositionally biased stretch (polar residues) spans 416 to 436 (LTQTDASSKGTTKPATPNPMT). Composition is skewed to low complexity over residues 444–455 (STPGSPSAAAEA) and 473–482 (TPTVTKESTP). The span at 492 to 504 (LDSKNTETNEDTR) shows a compositional bias: basic and acidic residues. The span at 505–521 (ATNTAHSMAPTVSSAIT) shows a compositional bias: polar residues. Composition is skewed to basic and acidic residues over residues 535 to 561 (KPKDTEKTDDAKDVHEANKQDLTKANE), 569 to 604 (VEPKDNEVSADSKVKARAESKSDHDSKTNNIPEKKV), and 627 to 650 (KSDKKAKPAEDPKEHDLKIEKLNE).

Belongs to the KNR4/SMI1 family.

The protein is KNR4/SMI1 homolog of Eremothecium gossypii (strain ATCC 10895 / CBS 109.51 / FGSC 9923 / NRRL Y-1056) (Yeast).